A 185-amino-acid chain; its full sequence is Small ribosomal subunit protein uS4c (185 aa).

An S4 RNA-binding domain is found at methionine 72–glutamate 134. The tract at residues lysine 132–arginine 154 is disordered.

It belongs to the universal ribosomal protein uS4 family. As to quaternary structure, part of the 30S ribosomal subunit. Contacts protein S5. The interaction surface between S4 and S5 is involved in control of translational fidelity.

It is found in the plastid. The protein resides in the chloroplast. In terms of biological role, one of the primary rRNA binding proteins, it binds directly to 16S rRNA where it nucleates assembly of the body of the 30S subunit. Functionally, with S5 and S12 plays an important role in translational accuracy. This chain is Small ribosomal subunit protein uS4c (rps4), found in Woodwardia radicans (Rooting chainfern).